The primary structure comprises 94 residues: Small ribosomal subunit protein uS19 (94 aa).

The protein belongs to the universal ribosomal protein uS19 family.

In terms of biological role, protein S19 forms a complex with S13 that binds strongly to the 16S ribosomal RNA. This is Small ribosomal subunit protein uS19 from Hamiltonella defensa subsp. Acyrthosiphon pisum (strain 5AT).